A 290-amino-acid polypeptide reads, in one-letter code: Manganese efflux system protein MneS (290 aa).

A run of 6 helical transmembrane segments spans residues 15–35 (LVSIAAYLVLSAIKLIIGYLF), 39–61 (ALTADGLNNTTDIIASVAVLIGL), 82–102 (IASLIASFIMMVVGLQVLFSA), 113–133 (TPDMIAAWTAAGGAVLMLIVY), 159–179 (AFVSIGTFIGIVAAQFHLAWI), and 181–201 (TVTAFVIGLLICKTAWDIFKE).

The protein belongs to the cation diffusion facilitator (CDF) transporter (TC 2.A.4) family.

The protein resides in the cell membrane. Functionally, secondary manganese efflux system. May prevent manganese intoxication. The polypeptide is Manganese efflux system protein MneS (Bacillus subtilis (strain 168)).